Reading from the N-terminus, the 173-residue chain is Small ribosomal subunit protein uS5 (173 aa).

In terms of domain architecture, S5 DRBM spans 17–80 (WQERVIQIRR…ADGKKQLIEV (64 aa)).

This sequence belongs to the universal ribosomal protein uS5 family. In terms of assembly, part of the 30S ribosomal subunit. Contacts proteins S4 and S8.

In terms of biological role, with S4 and S12 plays an important role in translational accuracy. Functionally, located at the back of the 30S subunit body where it stabilizes the conformation of the head with respect to the body. This is Small ribosomal subunit protein uS5 from Microcystis aeruginosa (strain NIES-843 / IAM M-2473).